A 627-amino-acid polypeptide reads, in one-letter code: Membrane protein insertase YidC (627 aa).

A helical transmembrane segment spans residues 8 to 28 (LFLALILSMGIWMGVNYFFFP). The span at 33–57 (KKNTETKQTQSDKTSENTKQQITSG) shows a compositional bias: polar residues. Residues 33-68 (KKNTETKQTQSDKTSENTKQQITSGKTKESNSADPV) are disordered. Residues 58 to 68 (KTKESNSADPV) show a composition bias toward basic and acidic residues. The next 4 membrane-spanning stretches (helical) occupy residues 417 to 437 (FTIPNYGWSIIIFAILFKLVF), 488 to 508 (VGGCLPMVIQIPIFIALYTAF), 536 to 556 (AIPYFTQTGIGLNLLALLMVG), and 575 to 595 (MLMYVMPVMMLYIFWNMPSGV).

It belongs to the OXA1/ALB3/YidC family. Type 1 subfamily. Interacts with the Sec translocase complex via SecD. Specifically interacts with transmembrane segments of nascent integral membrane proteins during membrane integration.

The protein resides in the cell inner membrane. Required for the insertion and/or proper folding and/or complex formation of integral membrane proteins into the membrane. Involved in integration of membrane proteins that insert both dependently and independently of the Sec translocase complex, as well as at least some lipoproteins. Aids folding of multispanning membrane proteins. The polypeptide is Membrane protein insertase YidC (Leptospira interrogans serogroup Icterohaemorrhagiae serovar Lai (strain 56601)).